The sequence spans 224 residues: Adenylate kinase (224 aa).

10-15 (GSGKST) contributes to the ATP binding site. The NMP stretch occupies residues 30–59 (ASGDIIRAEINKGNALGREMKKYIEKGDLL). AMP-binding positions include S31, R36, 57–59 (DLL), 83–86 (GYPR), and Q90. The tract at residues 124 to 161 (GRRICRQCGAVYHIKYNPSKVPGKCDICGGEVIQREDD) is LID. R125 provides a ligand contact to ATP. The Zn(2+) site is built by C128 and C131. 134–135 (VY) contacts ATP. 2 residues coordinate Zn(2+): C148 and C151. AMP-binding residues include R158 and R169. G197 is a binding site for ATP.

This sequence belongs to the adenylate kinase family. As to quaternary structure, monomer.

The protein resides in the cytoplasm. The enzyme catalyses AMP + ATP = 2 ADP. It participates in purine metabolism; AMP biosynthesis via salvage pathway; AMP from ADP: step 1/1. Its function is as follows. Catalyzes the reversible transfer of the terminal phosphate group between ATP and AMP. Plays an important role in cellular energy homeostasis and in adenine nucleotide metabolism. The polypeptide is Adenylate kinase (Thermococcus sibiricus (strain DSM 12597 / MM 739)).